The sequence spans 165 residues: MPAENSFDIVSDFDQQELVNAVDQTLREVQTRYDLKDAGVTITLTKTELIIEADSEMSLRSVRDVLETKALRRKLSLKIFDYGKPTDASGGRVRQVVTLRRGIDSELAKKLSKMIRDRFPKVQPRIQGDSLRVAGKSRDELQAVIAFLREREGEIPVPLQMTNYR.

It belongs to the YajQ family.

Nucleotide-binding protein. The protein is Nucleotide-binding protein Chy400_2003 of Chloroflexus aurantiacus (strain ATCC 29364 / DSM 637 / Y-400-fl).